The primary structure comprises 376 residues: Putative dihydroorotase (376 aa).

Residues His35 and His37 each coordinate Zn(2+). Residues 37-39 (HVR) and Asn66 contribute to the substrate site. Asp114, His138, and His187 together coordinate Zn(2+). Substrate is bound at residue Asn230. Asp257 provides a ligand contact to Zn(2+). The active site involves Asp257. Residues His261 and 273–274 (YG) contribute to the substrate site.

Belongs to the metallo-dependent hydrolases superfamily. DHOase family. Class I DHOase subfamily. Zn(2+) is required as a cofactor.

The catalysed reaction is (S)-dihydroorotate + H2O = N-carbamoyl-L-aspartate + H(+). It participates in pyrimidine metabolism; UMP biosynthesis via de novo pathway; (S)-dihydroorotate from bicarbonate: step 3/3. Catalyzes the reversible cyclization of carbamoyl aspartate to dihydroorotate. This Thermotoga maritima (strain ATCC 43589 / DSM 3109 / JCM 10099 / NBRC 100826 / MSB8) protein is Putative dihydroorotase (pyrC).